We begin with the raw amino-acid sequence, 292 residues long: MSVGLKVSAFLHPTLALSSRDVSLSSSSSSLYLDRKILRPGSGRRWCKSRRTEPILAVVESSRVPELDSSSEPVQVFDGSTRLYISYTCPFAQRAWIARNYKGLQNKIELVPIDLKNRPAWYKEKVYSANKVPALEHNNRVLGESLDLIKYIDTNFEGPSLTPDGLEKQVVADELLSYTDSFSKAVRSTLNGTDTNAADVAFDYIEQALSKFNEGPFFLGQFSLVDVAYAPFIERFRLILSDVMNVDITSGRPNLALWIQEMNKIEAYTETRQDPQELVERYKRRVQAEARL.

A chloroplast-targeting transit peptide spans 1–56 (MSVGLKVSAFLHPTLALSSRDVSLSSSSSSLYLDRKILRPGSGRRWCKSRRTEPIL). The 82-residue stretch at 79-160 (GSTRLYISYT…YIDTNFEGPS (82 aa)) folds into the GST N-terminal domain. Glutathione contacts are provided by residues 89-90 (CP), 117-118 (NR), 131-132 (KV), and 144-145 (ES). The region spanning 130-286 (NKVPALEHNN…ELVERYKRRV (157 aa)) is the GST C-terminal domain.

Belongs to the GST superfamily. Lambda family.

Its subcellular location is the plastid. The protein resides in the chloroplast. It carries out the reaction RX + glutathione = an S-substituted glutathione + a halide anion + H(+). Catalyzes the glutathione-dependent reduction of S-glutathionylquercetin to quercetin. In vitro, possesses glutathione-dependent thiol transferase activity toward 2-hydroxyethyl disulfide (HED). The chain is Glutathione S-transferase L2, chloroplastic (GSTL2) from Arabidopsis thaliana (Mouse-ear cress).